An 85-amino-acid chain; its full sequence is Beta-insect depressant toxin Lqh-dprIT3c (85 aa).

The first 21 residues, 1 to 21, serve as a signal peptide directing secretion; the sequence is MKLLLLLTISASMLIEGLVNA. Residues 22–82 enclose the LCN-type CS-alpha/beta domain; that stretch reads DGYIRGGDGC…EWDYETNTCG (61 aa). Disulfide bonds link Cys-31–Cys-81, Cys-35–Cys-56, Cys-42–Cys-63, and Cys-46–Cys-65. Gly-82 carries the post-translational modification Glycine amide.

The protein belongs to the long (4 C-C) scorpion toxin superfamily. Sodium channel inhibitor family. Beta subfamily. In terms of tissue distribution, expressed by the venom gland.

Its subcellular location is the secreted. In terms of biological role, depressant insect beta-toxins cause a transient contraction paralysis followed by a slow flaccid paralysis. They bind voltage-independently at site-4 of sodium channels (Nav) and block action potentials, primarily by depolarizing the axonal membrane and suppressing the sodium current. This depressant toxin is active only on insects. It is found in a relatively small amount in the venom, and its activity on insects is 10-fold higher compared to other known depressant toxins. The polypeptide is Beta-insect depressant toxin Lqh-dprIT3c (Leiurus hebraeus (Hebrew deathstalker scorpion)).